Reading from the N-terminus, the 124-residue chain is UPF0299 membrane protein VP1300 (124 aa).

4 helical membrane passes run 9–29 (LIQLLISLFLIMGALGIGITI), 35–55 (VSVPGSVIGMLVLFFSMTLGL), 72–92 (MILLFVPISVGLMQHFDMLLA), and 95–115 (LPIIASAVGGSLIVLVSLAWL).

It belongs to the UPF0299 family.

The protein localises to the cell inner membrane. The protein is UPF0299 membrane protein VP1300 of Vibrio parahaemolyticus serotype O3:K6 (strain RIMD 2210633).